A 438-amino-acid chain; its full sequence is Histidinol dehydrogenase (438 aa).

3 residues coordinate NAD(+): Tyr135, Gln193, and Asn216. Positions 243, 265, and 268 each coordinate substrate. Zn(2+) is bound by residues Gln265 and His268. Residues Glu332 and His333 each act as proton acceptor in the active site. Residues His333, Asp366, Glu420, and His425 each contribute to the substrate site. Asp366 is a binding site for Zn(2+). A Zn(2+)-binding site is contributed by His425.

This sequence belongs to the histidinol dehydrogenase family. It depends on Zn(2+) as a cofactor.

The catalysed reaction is L-histidinol + 2 NAD(+) + H2O = L-histidine + 2 NADH + 3 H(+). It functions in the pathway amino-acid biosynthesis; L-histidine biosynthesis; L-histidine from 5-phospho-alpha-D-ribose 1-diphosphate: step 9/9. Functionally, catalyzes the sequential NAD-dependent oxidations of L-histidinol to L-histidinaldehyde and then to L-histidine. In Shewanella oneidensis (strain ATCC 700550 / JCM 31522 / CIP 106686 / LMG 19005 / NCIMB 14063 / MR-1), this protein is Histidinol dehydrogenase.